The chain runs to 292 residues: Hemin import ATP-binding protein HmuV (292 aa).

Residues 38 to 271 (LRADGIAVTR…ELLTRVYGHP (234 aa)) enclose the ABC transporter domain. 70 to 77 (GPNGAGKS) provides a ligand contact to ATP.

It belongs to the ABC transporter superfamily. Heme (hemin) importer (TC 3.A.1.14.5) family. In terms of assembly, the complex is composed of two ATP-binding proteins (HmuV), two transmembrane proteins (HmuU) and a solute-binding protein (HmuT).

The protein resides in the cell membrane. Its function is as follows. Part of the ABC transporter complex HmuTUV involved in hemin import. Responsible for energy coupling to the transport system. The sequence is that of Hemin import ATP-binding protein HmuV from Rhodococcus jostii (strain RHA1).